A 610-amino-acid polypeptide reads, in one-letter code: MQYSHHCEHLLERLNKQREAGFLCDCTVVIGEFQFKAHRNVLASFSEYFGAIYRSTSENNVFLDQSQVKADGFQKLLEFIYTGTLNLDSWNVKEIHQAADYLKVEEVVTKCKIKMEDFAFIASPSSTEISSITGNIELNQQACLLTLRDYNNREKSEVSTDSVQANPKPRALTKKSSQSKKKKKAFSSQKPGQSKAVQYPSDVLESASVELFLETSKLSSPVVEQIIQGNDSSELELTSVVENTFPTQDIVQTVTVKRKRRKSQSHCALKEHSMSNIASVKSPYELENAGEELDARFSKAKPMCNTCGKVFSEASSLRRHMRIHKGVKPYVCHLCGKAFTQCNQLKTHVRTHTGERPYKCELCDKGFAQKCQLVFHSRMHHGEEKPYKCDVCNLQFATSSNLKIHARKHSGEKPYVCDRCGQRFAQASTLTYHVRRHTGEKPYVCDTCGKAFAVSSSLITHSRKHTGEKPYICGICGKSFISSGELNKHFRSHTGERPFICELCGNSYTDIKNLKKHKTKVHSGTDKNPDCSVDDHAVSEQDSVQRSPLSETLDVKPSDMTLPLALPLGTEDHQMLLPVTDSQSPASDTLLRSTVNGYSEPQLIFLQQLY.

Residues 24-89 enclose the BTB domain; it reads CDCTVVIGEF…IYTGTLNLDS (66 aa). The interval 156 to 199 is disordered; it reads SEVSTDSVQANPKPRALTKKSSQSKKKKKAFSSQKPGQSKAVQY. Residues 171-185 show a composition bias toward basic residues; the sequence is ALTKKSSQSKKKKKA. Short sequence motifs (nuclear localization signal) lie at residues 174–190 and 257–262; these read KKSSQSKKKKKAFSSQK and KRKRRK. 8 consecutive C2H2-type zinc fingers follow at residues 302–324, 330–352, 358–381, 387–409, 415–437, 443–465, 471–493, and 499–522; these read PMCNTCGKVFSEASSLRRHMRIH, YVCHLCGKAFTQCNQLKTHVRTH, YKCELCDKGFAQKCQLVFHSRMHH, YKCDVCNLQFATSSNLKIHARKH, YVCDRCGQRFAQASTLTYHVRRH, YVCDTCGKAFAVSSSLITHSRKH, YICGICGKSFISSGELNKHFRSH, and FICELCGNSYTDIKNLKKHKTKVH. The segment at 519–548 is disordered; the sequence is TKVHSGTDKNPDCSVDDHAVSEQDSVQRSP. Residues 523–539 are compositionally biased toward basic and acidic residues; it reads SGTDKNPDCSVDDHAVS.

It belongs to the krueppel C2H2-type zinc-finger protein family. In terms of tissue distribution, mainly expressed in the neuromuscular system. Located in and around synaptic myonuclei in adult muscle. Expression is dysregulated after nerve injury. Also found in the cerebellum, testis, heart, brain and liver.

The protein localises to the nucleus. This Mus musculus (Mouse) protein is Myoneurin (Mynn).